Reading from the N-terminus, the 179-residue chain is MAGPDRAELAELVRRLSVVHGRVTLSSGREADYYVDLRRATLHHRASALIGRLMRELTADWDYSVVGGLTLGADPVATAIMHAPGRPIDAFVVRKSAKAHGMQRLIEGSEVTGQRVLVVEDTSTTGNSALTAVHAVQDVGGEVVGVATVVDRATGAAEAIEAEGLRYRSVLGLADLGLD.

5-phospho-alpha-D-ribose 1-diphosphate is bound by residues arginine 94, lysine 95, lysine 98, histidine 100, and 120–128; that span reads EDTSTTGNS. Residues threonine 124 and arginine 152 each contribute to the orotate site.

Belongs to the purine/pyrimidine phosphoribosyltransferase family. PyrE subfamily. Homodimer. Mg(2+) is required as a cofactor.

It catalyses the reaction orotidine 5'-phosphate + diphosphate = orotate + 5-phospho-alpha-D-ribose 1-diphosphate. Its pathway is pyrimidine metabolism; UMP biosynthesis via de novo pathway; UMP from orotate: step 1/2. Its function is as follows. Catalyzes the transfer of a ribosyl phosphate group from 5-phosphoribose 1-diphosphate to orotate, leading to the formation of orotidine monophosphate (OMP). The sequence is that of Orotate phosphoribosyltransferase from Mycobacterium bovis (strain ATCC BAA-935 / AF2122/97).